A 318-amino-acid polypeptide reads, in one-letter code: tRNA-modifying protein YgfZ (318 aa).

Folate-binding residues include tryptophan 24 and tryptophan 185.

The protein belongs to the tRNA-modifying YgfZ family.

Its subcellular location is the cytoplasm. Its function is as follows. Folate-binding protein involved in regulating the level of ATP-DnaA and in the modification of some tRNAs. It is probably a key factor in regulatory networks that act via tRNA modification, such as initiation of chromosomal replication. The protein is tRNA-modifying protein YgfZ of Buchnera aphidicola subsp. Baizongia pistaciae (strain Bp).